A 268-amino-acid polypeptide reads, in one-letter code: Interleukin-1 beta (268 aa).

Positions 1–116 (MATVPELNCE…WDDDDLLVCD (116 aa)) are excised as a propeptide.

Belongs to the IL-1 family. As to quaternary structure, monomer. In its precursor form, weakly interacts with full-length MEFV; the mature cytokine does not interact at all. Interacts with integrins ITGAV:ITGBV and ITGA5:ITGB1; integrin-binding is required for IL1B signaling. Interacts with cargo receptor TMED10; the interaction is direct and is required for the secretion of IL1B mature form. Interacts with HSP90AB1; the interaction facilitates cargo translocation into the ERGIC. Interacts with HSP90B1; the interaction facilitates cargo translocation into the ERGIC.

The protein localises to the cytoplasm. The protein resides in the cytosol. It localises to the secreted. It is found in the lysosome. Its subcellular location is the extracellular exosome. Its function is as follows. Potent pro-inflammatory cytokine. Initially discovered as the major endogenous pyrogen, induces prostaglandin synthesis, neutrophil influx and activation, T-cell activation and cytokine production, B-cell activation and antibody production, and fibroblast proliferation and collagen production. Promotes Th17 differentiation of T-cells. Synergizes with IL12/interleukin-12 to induce IFNG synthesis from T-helper 1 (Th1) cells. Plays a role in angiogenesis by inducing VEGF production synergistically with TNF and IL6. Involved in transduction of inflammation downstream of pyroptosis: its mature form is specifically released in the extracellular milieu by passing through the gasdermin-D (GSDMD) pore. The protein is Interleukin-1 beta of Rattus norvegicus (Rat).